Consider the following 4690-residue polypeptide: Nonribosomal peptide synthetase sidN (4690 aa).

Residues 238–656 (ARVRENPGRI…LGRLSSDQIK (419 aa)) are adenylation 1. One can recognise a Carrier 1 domain in the interval 779 to 856 (SSSIPMLQSV…DLDTKAQQAL (78 aa)). Serine 816 is subject to O-(pantetheine 4'-phosphoryl)serine. A condensation 1 region spans residues 924–1175 (APGGKAFIQH…AFGNTMSDRF (252 aa)). Residues 1349-1760 (EFAQKSPNAI…GRKDDLVKIR (412 aa)) form an adenylation 2 region. The region spanning 1889 to 1965 (PAWCIKHRPL…DLINHLSVKR (77 aa)) is the Carrier 2 domain. O-(pantetheine 4'-phosphoryl)serine is present on serine 1926. Residues 2001–2285 (PTTVFQDGML…SERLLESQLV (285 aa)) are condensation 2. The adenylation 3 stretch occupies residues 2464-2869 (TWAKTHPEWK…GRKDEQVKVR (406 aa)). In terms of domain architecture, Carrier 3 spans 3002–3079 (RDLTSIEKQI…ELGRMKNALK (78 aa)). Serine 3040 carries the post-translational modification O-(pantetheine 4'-phosphoryl)serine. The interval 3121–3530 (CMPLQEVLVA…QMESLVTSFT (410 aa)) is condensation 3. The Carrier 4 domain maps to 3564–3637 (SVLEQQIRDV…KLATHIQTTS (74 aa)). Serine 3598 carries the O-(pantetheine 4'-phosphoryl)serine modification. The tract at residues 3679–4087 (VYPLTPLQAG…FESIRKHPDE (409 aa)) is condensation 4. Positions 4119–4195 (SAIDQFLDPL…KLCEVAFAKS (77 aa)) constitute a Carrier 5 domain. At serine 4156 the chain carries O-(pantetheine 4'-phosphoryl)serine. Residues 4262 to 4589 (WVFKAENGLD…FNAHLNILWN (328 aa)) form a condensation 5 region.

Belongs to the NRP synthetase family.

It functions in the pathway siderophore biosynthesis. Nonribosomal peptide synthetase required for the biosynthetis of epichloenin A, an extracellular siderophore that plays a crucial role in endophyte-grass symbioses. SidN assembles epichloenin A by activating and incorporating three trans-anhydromevalonylhydroxyornithine (trans-AMHO), 1 glutamine and 4 glycine moieties. Trans-AMHO is produced from L-ornithine via 2 steps involving a L-ornithine N(5)-monooxygenase and an AHMO-N(5)-transacylase that have still to be identified. The third adenylation domain (A3) of sidN incorporates the hydroxamate groups of the siderophore which forms an octahedral iron complex. The other component amino acids are assembled by sidN adenylation domains A1 and A2. This is Nonribosomal peptide synthetase sidN from Epichloe festucae (strain Fl1).